Consider the following 400-residue polypeptide: Putative cytochrome P450 141 (400 aa).

2 helical membrane passes run 225 to 245 (VVGMLLTVVIGGVDTPIAVIT) and 294 to 314 (VVIAGTALSAGSPAFTSITSA). C346 contributes to the heme binding site.

The protein belongs to the cytochrome P450 family. Heme is required as a cofactor.

Its subcellular location is the cell membrane. This Mycobacterium tuberculosis (strain CDC 1551 / Oshkosh) protein is Putative cytochrome P450 141 (cyp141).